Here is a 212-residue protein sequence, read N- to C-terminus: ATP-dependent Clp protease proteolytic subunit (212 aa).

Ser-107 functions as the Nucleophile in the catalytic mechanism. His-132 is an active-site residue.

It belongs to the peptidase S14 family. Fourteen ClpP subunits assemble into 2 heptameric rings which stack back to back to give a disk-like structure with a central cavity, resembling the structure of eukaryotic proteasomes.

The protein localises to the cytoplasm. The catalysed reaction is Hydrolysis of proteins to small peptides in the presence of ATP and magnesium. alpha-casein is the usual test substrate. In the absence of ATP, only oligopeptides shorter than five residues are hydrolyzed (such as succinyl-Leu-Tyr-|-NHMec, and Leu-Tyr-Leu-|-Tyr-Trp, in which cleavage of the -Tyr-|-Leu- and -Tyr-|-Trp bonds also occurs).. In terms of biological role, cleaves peptides in various proteins in a process that requires ATP hydrolysis. Has a chymotrypsin-like activity. Plays a major role in the degradation of misfolded proteins. The polypeptide is ATP-dependent Clp protease proteolytic subunit (Pseudoalteromonas atlantica (strain T6c / ATCC BAA-1087)).